A 336-amino-acid polypeptide reads, in one-letter code: Probable GTPase MT1543 (336 aa).

GTP-binding positions include 67–75 (GVPGVGKST), aspartate 209, and 245–247 (SAV).

This sequence belongs to the SIMIBI class G3E GTPase family. ArgK/MeaB subfamily. Homodimer.

Probable GTPase. May also bind and hydrolyze ATP. May function as chaperone. The chain is Probable GTPase MT1543 from Mycobacterium tuberculosis (strain CDC 1551 / Oshkosh).